A 156-amino-acid chain; its full sequence is Small ribosomal subunit protein uS7 (156 aa).

The protein belongs to the universal ribosomal protein uS7 family. In terms of assembly, part of the 30S ribosomal subunit. Contacts proteins S9 and S11.

In terms of biological role, one of the primary rRNA binding proteins, it binds directly to 16S rRNA where it nucleates assembly of the head domain of the 30S subunit. Is located at the subunit interface close to the decoding center, probably blocks exit of the E-site tRNA. The protein is Small ribosomal subunit protein uS7 of Erwinia tasmaniensis (strain DSM 17950 / CFBP 7177 / CIP 109463 / NCPPB 4357 / Et1/99).